Here is a 245-residue protein sequence, read N- to C-terminus: tRNA pseudouridine synthase A 2 (245 aa).

Asp53 functions as the Nucleophile in the catalytic mechanism. Tyr111 provides a ligand contact to substrate.

The protein belongs to the tRNA pseudouridine synthase TruA family. As to quaternary structure, homodimer.

The enzyme catalyses uridine(38/39/40) in tRNA = pseudouridine(38/39/40) in tRNA. Formation of pseudouridine at positions 38, 39 and 40 in the anticodon stem and loop of transfer RNAs. The polypeptide is tRNA pseudouridine synthase A 2 (Bacillus cereus (strain ATCC 10987 / NRS 248)).